The sequence spans 197 residues: Dephospho-CoA kinase (197 aa).

Positions 2 to 197 (IIGLTGGIAS…GAIKDLANLV (196 aa)) constitute a DPCK domain. Residue 10–15 (ASGKST) participates in ATP binding.

The protein belongs to the CoaE family.

The protein localises to the cytoplasm. The enzyme catalyses 3'-dephospho-CoA + ATP = ADP + CoA + H(+). It participates in cofactor biosynthesis; coenzyme A biosynthesis; CoA from (R)-pantothenate: step 5/5. Functionally, catalyzes the phosphorylation of the 3'-hydroxyl group of dephosphocoenzyme A to form coenzyme A. The polypeptide is Dephospho-CoA kinase (Streptococcus thermophilus (strain CNRZ 1066)).